The following is a 393-amino-acid chain: Serpin-Z4 (393 aa).

The RCL stretch occupies residues 342–366; it reads GTEAAAVSVASMTKDMLLMGDFVAD.

This sequence belongs to the serpin family.

In terms of biological role, probable serine protease inhibitor. The chain is Serpin-Z4 from Arabidopsis thaliana (Mouse-ear cress).